Reading from the N-terminus, the 370-residue chain is 3-isopropylmalate dehydrogenase (370 aa).

77-90 (GPKWDSVPYEVRPE) contacts NAD(+). Residues Arg-97, Arg-107, Arg-135, and Asp-226 each coordinate substrate. Mg(2+) contacts are provided by Asp-226, Asp-250, and Asp-254. 290-302 (GSAPDIAGKGIAN) contributes to the NAD(+) binding site.

The protein belongs to the isocitrate and isopropylmalate dehydrogenases family. LeuB type 1 subfamily. In terms of assembly, homodimer. The cofactor is Mg(2+). Mn(2+) is required as a cofactor.

Its subcellular location is the cytoplasm. The catalysed reaction is (2R,3S)-3-isopropylmalate + NAD(+) = 4-methyl-2-oxopentanoate + CO2 + NADH. It participates in amino-acid biosynthesis; L-leucine biosynthesis; L-leucine from 3-methyl-2-oxobutanoate: step 3/4. Catalyzes the oxidation of 3-carboxy-2-hydroxy-4-methylpentanoate (3-isopropylmalate) to 3-carboxy-4-methyl-2-oxopentanoate. The product decarboxylates to 4-methyl-2 oxopentanoate. The polypeptide is 3-isopropylmalate dehydrogenase (Rhizobium johnstonii (strain DSM 114642 / LMG 32736 / 3841) (Rhizobium leguminosarum bv. viciae)).